Here is a 70-residue protein sequence, read N- to C-terminus: Turripeptide Ici9.2 (70 aa).

An N-terminal signal peptide occupies residues 1–20 (MKVYCLLLVLLVGLVSQAQG). The region spanning 21-70 (QLDKKCQTMCTMEYLPVCGSDGTTYPNKCTLTSTACVNQMDITVLHNGEC) is the Kazal-like domain. Disulfide bonds link Cys-26-Cys-56, Cys-30-Cys-49, and Cys-38-Cys-70.

This sequence belongs to the conopeptide P-like superfamily. As to expression, expressed by the venom duct.

It localises to the secreted. In terms of biological role, acts as a neurotoxin by inhibiting an ion channel. May also act as a serine protease inhibitor, since it possess the kazal serine protease inhibitor signature. This is Turripeptide Ici9.2 from Iotyrris cingulifera (Sea snail).